We begin with the raw amino-acid sequence, 529 residues long: Bifunctional purine biosynthesis protein PurH (529 aa).

Residues 1 to 148 (MQQRRPVRRA…KNHRDVAIVV (148 aa)) enclose the MGS-like domain. At lysine 287 the chain carries N6-acetyllysine.

The protein belongs to the PurH family.

The catalysed reaction is (6R)-10-formyltetrahydrofolate + 5-amino-1-(5-phospho-beta-D-ribosyl)imidazole-4-carboxamide = 5-formamido-1-(5-phospho-D-ribosyl)imidazole-4-carboxamide + (6S)-5,6,7,8-tetrahydrofolate. The enzyme catalyses IMP + H2O = 5-formamido-1-(5-phospho-D-ribosyl)imidazole-4-carboxamide. The protein operates within purine metabolism; IMP biosynthesis via de novo pathway; 5-formamido-1-(5-phospho-D-ribosyl)imidazole-4-carboxamide from 5-amino-1-(5-phospho-D-ribosyl)imidazole-4-carboxamide (10-formyl THF route): step 1/1. It functions in the pathway purine metabolism; IMP biosynthesis via de novo pathway; IMP from 5-formamido-1-(5-phospho-D-ribosyl)imidazole-4-carboxamide: step 1/1. The protein is Bifunctional purine biosynthesis protein PurH of Escherichia coli O6:K15:H31 (strain 536 / UPEC).